A 942-amino-acid polypeptide reads, in one-letter code: AP-1 complex subunit beta (942 aa).

6 HEAT repeats span residues 45-82, 117-154, 156-193, 273-313, 384-421, and 458-495; these read KDVS…NHPD, NITE…VNPE, VENQ…VSKK, DVIR…KRPE, RASE…KYPN, and DNAH…KRPK. Residues 590–700 are disordered; sequence GLRNKEEEDE…NDLSFLGGGG (111 aa). Acidic residues predominate over residues 596 to 609; sequence EEDEEEPDYVDDDN. 2 stretches are compositionally biased toward low complexity: residues 613–645 and 664–677; these read QQGG…QQQP and NNNN…NNNN. A compositionally biased stretch (polar residues) spans 678-693; it reads MYSPQPQQFNGNSNDL.

It belongs to the adaptor complexes large subunit family. As to quaternary structure, adaptor protein complex 1 (AP-1) is a heterotetramer composed of two large adaptins (gamma-type subunit and beta-type subunit), a medium adaptin (mu-type subunit) and a small adaptin (sigma-type subunit).

It localises to the golgi apparatus. Its subcellular location is the trans-Golgi network. It is found in the cytoplasmic vesicle. The protein localises to the clathrin-coated vesicle membrane. Subunit of clathrin-associated adaptor protein complex 1 that plays a role in protein sorting in the trans-Golgi network (TGN) and endosomes. The AP complexes mediate the recruitment of clathrin to membranes and the recognition of sorting signals within the cytosolic tails of transmembrane cargo molecules. Also involved in early steps of phagocytosis and macropinocytosis. This Dictyostelium discoideum (Social amoeba) protein is AP-1 complex subunit beta (ap1b1).